The following is a 695-amino-acid chain: Elongation factor G (695 aa).

A tr-type G domain is found at 8–282; it reads EKTRNIGIMA…AVLDYLPAPT (275 aa). Residues 17-24, 81-85, and 135-138 contribute to the GTP site; these read AHIDAGKT, DTPGH, and NKMD.

This sequence belongs to the TRAFAC class translation factor GTPase superfamily. Classic translation factor GTPase family. EF-G/EF-2 subfamily.

It is found in the cytoplasm. In terms of biological role, catalyzes the GTP-dependent ribosomal translocation step during translation elongation. During this step, the ribosome changes from the pre-translocational (PRE) to the post-translocational (POST) state as the newly formed A-site-bound peptidyl-tRNA and P-site-bound deacylated tRNA move to the P and E sites, respectively. Catalyzes the coordinated movement of the two tRNA molecules, the mRNA and conformational changes in the ribosome. This Listeria monocytogenes serotype 4b (strain CLIP80459) protein is Elongation factor G.